Here is a 260-residue protein sequence, read N- to C-terminus: Carbonic anhydrase 2 (260 aa).

An N-acetylserine modification is found at Ser2. Position 2 is a phosphoserine (Ser2). An Alpha-carbonic anhydrase domain is found at 3 to 259 (HHWGYGEHNG…LKNRQVRVFP (257 aa)). Catalysis depends on His64, which acts as the Proton donor/acceptor. His94, His96, and His119 together coordinate Zn(2+). Phosphoserine occurs at positions 165 and 172. Residue 198-199 (TN) coordinates substrate.

This sequence belongs to the alpha-carbonic anhydrase family. As to quaternary structure, interacts with SLC4A4 and SLC26A6. Interaction with SLC4A7 regulates SLC4A7 transporter activity. It depends on Zn(2+) as a cofactor.

It localises to the cytoplasm. The protein resides in the cell membrane. The enzyme catalyses hydrogencarbonate + H(+) = CO2 + H2O. It catalyses the reaction urea = cyanamide + H2O. Its activity is regulated as follows. Inhibited by acetazolamide. Functionally, catalyzes the reversible hydration of carbon dioxide. Can also hydrate cyanamide to urea. Involved in the regulation of fluid secretion into the anterior chamber of the eye. Essential for bone resorption and osteoclast differentiation. Contributes to intracellular pH regulation in the duodenal upper villous epithelium during proton-coupled peptide absorption. Stimulates the chloride-bicarbonate exchange activity of SLC26A6. The polypeptide is Carbonic anhydrase 2 (CA2) (Ovis aries (Sheep)).